The sequence spans 140 residues: 3-hydroxyacyl-[acyl-carrier-protein] dehydratase FabZ (140 aa).

His47 is an active-site residue.

The protein belongs to the thioester dehydratase family. FabZ subfamily.

The protein resides in the cytoplasm. The enzyme catalyses a (3R)-hydroxyacyl-[ACP] = a (2E)-enoyl-[ACP] + H2O. In terms of biological role, involved in unsaturated fatty acids biosynthesis. Catalyzes the dehydration of short chain beta-hydroxyacyl-ACPs and long chain saturated and unsaturated beta-hydroxyacyl-ACPs. In Streptococcus mutans serotype c (strain ATCC 700610 / UA159), this protein is 3-hydroxyacyl-[acyl-carrier-protein] dehydratase FabZ.